Reading from the N-terminus, the 210-residue chain is Somatotropin (210 aa).

The signal sequence occupies residues 1–22 (MAKALVLLSLVLVSVFVNNGTA). Residue H38 coordinates Zn(2+). The cysteines at positions 71 and 183 are disulfide-linked. E192 is a Zn(2+) binding site. C200 and C208 form a disulfide bridge.

This sequence belongs to the somatotropin/prolactin family.

It localises to the secreted. Growth hormone plays an important role in growth control and is involved in the regulation of several anabolic processes. Implicated as an osmoregulatory substance important for seawater adaptation. This Misgurnus mizolepis (Chinese weatherloach) protein is Somatotropin (gh).